We begin with the raw amino-acid sequence, 756 residues long: 1,4-alpha-glucan branching enzyme GlgB (756 aa).

The Nucleophile role is filled by Asp431. Glu484 functions as the Proton donor in the catalytic mechanism.

This sequence belongs to the glycosyl hydrolase 13 family. GlgB subfamily. In terms of assembly, monomer.

The catalysed reaction is Transfers a segment of a (1-&gt;4)-alpha-D-glucan chain to a primary hydroxy group in a similar glucan chain.. Its pathway is glycan biosynthesis; glycogen biosynthesis. Its function is as follows. Catalyzes the formation of the alpha-1,6-glucosidic linkages in glycogen by scission of a 1,4-alpha-linked oligosaccharide from growing alpha-1,4-glucan chains and the subsequent attachment of the oligosaccharide to the alpha-1,6 position. The chain is 1,4-alpha-glucan branching enzyme GlgB from Prochlorococcus marinus (strain MIT 9303).